Consider the following 412-residue polypeptide: Nucleoside transporter 1 (412 aa).

The disordered stretch occupies residues 1-21; that stretch reads MSKIKESSSGILGASNNTNKE. Topologically, residues 1–29 are cytoplasmic; sequence MSKIKESSSGILGASNNTNKESSQKSARS. A compositionally biased stretch (polar residues) spans 7-21; that stretch reads SSSGILGASNNTNKE. Residues 30 to 50 form a helical membrane-spanning segment; the sequence is IALPMTYALIGVSCLNVWNSA. Residues 51-56 are Extracellular-facing; sequence LGLNIK. A helical transmembrane segment spans residues 57 to 77; it reads ITYNIFQMAGLLTSSVLALFV. The Cytoplasmic portion of the chain corresponds to 78 to 81; sequence NYPR. A helical membrane pass occupies residues 82-102; that stretch reads VLLPTSLGVLTLLCAGFQIAH. The Extracellular portion of the chain corresponds to 103–114; that stretch reads QTFSDSAFDTYC. Residues 115–135 form a helical membrane-spanning segment; the sequence is LAAFITIGLMAGIAQTIAFAI. The Cytoplasmic segment spans residues 136–144; that stretch reads GTTKESNMS. The chain crosses the membrane as a helical span at residues 145-165; that stretch reads GYISAGIGMSGVLIFCINLIL. At 166–181 the chain is on the extracellular side; the sequence is DYIVSDEKIYEINKSK. Residues 182 to 202 form a helical membrane-spanning segment; the sequence is LLCLFSISEIFLIITIVCCVL. The Cytoplasmic segment spans residues 203 to 240; sequence YIDLFPKNDNNKDSTDIEKAEEKEGRLPLIEIIKDGYK. The chain crosses the membrane as a helical span at residues 241–261; sequence AILSIFLVNWLSLQLFPGIGH. Residues 262 to 271 lie on the Extracellular side of the membrane; it reads KKWQEKHGMT. Residues 272-294 form a helical membrane-spanning segment; that stretch reads DNNVTIIVGMFQVFDFISRYPPN. Topologically, residues 295–310 are cytoplasmic; sequence FTHIKIFKYFTFSLNT. The helical transmembrane segment at 311–331 threads the bilayer; the sequence is LLIGNFLRLLFIPWFVLNAVI. Over 332–343 the chain is Extracellular; it reads SSSFFTNIVQQC. Residues 344 to 364 form a helical membrane-spanning segment; sequence VCIAALAFTNGWFNTVPFIVF. Topologically, residues 365–382 are cytoplasmic; the sequence is VKELKKVKHQKDIETISR. Residues 383 to 403 form a helical membrane-spanning segment; sequence IMVVSLFFGLFFGMLTTCLYD. The Extracellular segment spans residues 404–412; the sequence is YFPIGILNN.

This sequence belongs to the SLC29A/ENT transporter (TC 2.A.57) family.

The protein resides in the cell membrane. The enzyme catalyses inosine(in) = inosine(out). It carries out the reaction adenosine(in) = adenosine(out). The catalysed reaction is hypoxanthine(out) = hypoxanthine(in). It catalyses the reaction guanosine(in) = guanosine(out). The enzyme catalyses guanine(out) = guanine(in). It carries out the reaction thymidine(in) = thymidine(out). The catalysed reaction is uridine(out) = uridine(in). It catalyses the reaction uracil(in) = uracil(out). The enzyme catalyses thymine(out) = thymine(in). It carries out the reaction adenine(out) = adenine(in). The catalysed reaction is cytosine(out) = cytosine(in). It catalyses the reaction xanthine(out) = xanthine(in). In terms of biological role, nucleoside and nucleobase transporter with a broad substrate specificity. This chain is Nucleoside transporter 1, found in Plasmodium berghei (strain Anka).